Consider the following 145-residue polypeptide: Large ribosomal subunit protein uL11 (145 aa).

This sequence belongs to the universal ribosomal protein uL11 family. Part of the ribosomal stalk of the 50S ribosomal subunit. Interacts with L10 and the large rRNA to form the base of the stalk. L10 forms an elongated spine to which L12 dimers bind in a sequential fashion forming a multimeric L10(L12)X complex. Post-translationally, one or more lysine residues are methylated.

Forms part of the ribosomal stalk which helps the ribosome interact with GTP-bound translation factors. This is Large ribosomal subunit protein uL11 from Rubrobacter xylanophilus (strain DSM 9941 / JCM 11954 / NBRC 16129 / PRD-1).